Here is a 725-residue protein sequence, read N- to C-terminus: Catalase-peroxidase (725 aa).

Composition is skewed to polar residues over residues 1–12 (MSTSNDPSNNAS) and 23–32 (PKQSAGSGTA). An N-terminal signal peptide occupies residues 1 to 20 (MSTSNDPSNNASAGKCPFHA). A disordered region spans residues 1–35 (MSTSNDPSNNASAGKCPFHAETPKQSAGSGTANRD). Residues 105-226 (WHGAGTYRTV…IGATEMGLIY (122 aa)) constitute a cross-link (tryptophyl-tyrosyl-methioninium (Trp-Tyr) (with M-252)). His106 functions as the Proton acceptor in the catalytic mechanism. Residues 226–252 (YVNPEGPNASGEPLSAAAAIRATFGNM) constitute a cross-link (tryptophyl-tyrosyl-methioninium (Tyr-Met) (with W-105)). Position 267 (His267) interacts with heme b.

This sequence belongs to the peroxidase family. Peroxidase/catalase subfamily. Homodimer or homotetramer. Heme b is required as a cofactor. In terms of processing, formation of the three residue Trp-Tyr-Met cross-link is important for the catalase, but not the peroxidase activity of the enzyme.

The enzyme catalyses H2O2 + AH2 = A + 2 H2O. It catalyses the reaction 2 H2O2 = O2 + 2 H2O. In terms of biological role, bifunctional enzyme with both catalase and broad-spectrum peroxidase activity. In Klebsiella pneumoniae subsp. pneumoniae (strain ATCC 700721 / MGH 78578), this protein is Catalase-peroxidase.